We begin with the raw amino-acid sequence, 196 residues long: Calmodulin-like protein 4 (196 aa).

Residues 1-43 are disordered; that stretch reads MAAEHLLPGPPPSLADFRLEAGGKGTERGSGSSKPTGSSRGPR. The segment covering 17 to 27 has biased composition (basic and acidic residues); it reads FRLEAGGKGTE. A compositionally biased stretch (polar residues) spans 29–39; the sequence is GSGSSKPTGSS. EF-hand domains follow at residues 51-86, 87-122, 124-159, and 160-195; these read DQINEYKECFSLYDKQQRGKIKATDLMVAMRCLGAS, PTPGEVQRHLQTHGIDGNGELDFSTFLTIMHMQIKQ, DPKKEILLAMLMVDKEKKGYVMASDLRSKLTSLGEK, and LTHKEVDDLFREADIEPNGKVKYDEFIHKITLPGRD.

Belongs to the calmodulin family. As to quaternary structure, interacts with MYO7B; the interaction mediates the association of CALML4 with the IMAC/intermicrovillar adhesion complex. Interacts with MYO7A. In terms of tissue distribution, expressed in the intestinal tract. Dominant transcript in the intestinal tract.

It localises to the cell projection. Its subcellular location is the microvillus. As part of the intermicrovillar adhesion complex/IMAC plays a role in epithelial brush border differentiation, controlling microvilli organization and length. Acts as a light chain for MYO7B and is required for efficient targeting of the IMAC to the tips of border brush microvilli. This Homo sapiens (Human) protein is Calmodulin-like protein 4.